A 320-amino-acid polypeptide reads, in one-letter code: MNFVKNKLVVVGAGMVGSAVLNSVLSLNLLSEVVIIDINDNKAKGEALDASHTTSFAYSPNVKVRAGNYEDCADAQIIVITAGPSLKPDDKLDRLVLADTNVKVTDSIMKNICKYTKDAIIIVVTNPVDIATYYCQNNFDYPKNKIIGTGTLLDTARMRKIIGKKYNVDSKNVHGYVLGEHGGSSFTSWSDVNIAGIPFNQLNDIFKDHYKVDKDEVDKEVRDSGIEVLKLKGYTSAGIAMSVSRLVKAMLLNEQSILPVSSTLEGEYGINDVALSIPCIITSNGIEKKLEIPLSKDEVEKLNKSADNLKSIIKGLNTNK.

NAD(+) is bound by residues Val-16, Asp-37, Lys-42, and Tyr-69. Residue Arg-94 coordinates substrate. Residues Ser-107, 124–126 (VTN), and Thr-149 each bind NAD(+). 126–129 (NPVD) provides a ligand contact to substrate. Residue 154–157 (DTAR) participates in substrate binding. Residues Arg-159 and His-174 each coordinate beta-D-fructose 1,6-bisphosphate. His-181 (proton acceptor) is an active-site residue. A substrate-binding site is contributed by Thr-235.

Belongs to the LDH/MDH superfamily. LDH family. Homotetramer.

The protein resides in the cytoplasm. It catalyses the reaction (S)-lactate + NAD(+) = pyruvate + NADH + H(+). The protein operates within fermentation; pyruvate fermentation to lactate; (S)-lactate from pyruvate: step 1/1. Its activity is regulated as follows. Allosterically activated by fructose 1,6-bisphosphate (FBP). Its function is as follows. Catalyzes the conversion of lactate to pyruvate. The protein is L-lactate dehydrogenase 2 of Clostridium acetobutylicum (strain ATCC 824 / DSM 792 / JCM 1419 / IAM 19013 / LMG 5710 / NBRC 13948 / NRRL B-527 / VKM B-1787 / 2291 / W).